The primary structure comprises 114 residues: DNA-directed RNA polymerases II, IV and V subunit 9A (114 aa).

Positions 7, 10, 29, 32, 76, 79, 103, and 108 each coordinate Zn(2+). A TFIIS-type zinc finger spans residues 72 to 113 (KAVRCSKCQHREAVFFQATARGEEGMTLFFVCCNPNCGHRWR).

This sequence belongs to the archaeal RpoM/eukaryotic RPA12/RPB9/RPC11 RNA polymerase family. Component of the RNA polymerase II, IV and V complexes. Interacts with NRPD1.

The protein localises to the nucleus. The protein resides in the nucleolus. In terms of biological role, DNA-dependent RNA polymerase catalyzes the transcription of DNA into RNA using the four ribonucleoside triphosphates as substrates. Component of RNA polymerase II which synthesizes mRNA precursors and many functional non-coding RNAs. Pol II is the central component of the basal RNA polymerase II transcription machinery. It is composed of mobile elements that move relative to each other. Component of RNA polymerases IV and V which mediate short-interfering RNAs (siRNA) accumulation and subsequent RNA-directed DNA methylation-dependent (RdDM) transcriptional gene silencing (TGS) of endogenous repeated sequences, including transposable elements. Required for RNA silencing. The sequence is that of DNA-directed RNA polymerases II, IV and V subunit 9A (NRPB9A) from Arabidopsis thaliana (Mouse-ear cress).